The primary structure comprises 603 residues: Probable lysosomal cobalamin transporter (603 aa).

A run of 9 helical transmembrane segments spans residues 13–33 (IWVA…ITVF), 50–70 (IVSL…IALV), 99–119 (IVYY…IPFA), 150–170 (IAFI…PTAA), 201–221 (LLMT…LALL), 318–338 (LFGG…MLIT), 353–373 (GYIL…VKAA), 381–401 (ILMA…IASV), and 422–442 (ALLI…YAVV). Asn509 carries an N-linked (GlcNAc...) asparagine glycan. Residues 512–532 (VFGAIDFWAQFAFLTVFLLVF) form a helical membrane-spanning segment. Residue Asn543 is glycosylated (N-linked (GlcNAc...) asparagine). The segment at 578-603 (AKRTVGGHPNGQGYGTSGTNGTASSR) is disordered. The segment covering 585 to 595 (HPNGQGYGTSG) has biased composition (gly residues). The N-linked (GlcNAc...) asparagine glycan is linked to Asn597.

It belongs to the LIMR family. LMBRD1 subfamily.

The protein localises to the lysosome membrane. Probable lysosomal cobalamin transporter. Required to export cobalamin from lysosomes allowing its conversion to cofactors. The chain is Probable lysosomal cobalamin transporter from Neurospora crassa (strain ATCC 24698 / 74-OR23-1A / CBS 708.71 / DSM 1257 / FGSC 987).